We begin with the raw amino-acid sequence, 213 residues long: Transcription antitermination protein NusB (213 aa).

It belongs to the NusB family.

Its function is as follows. Involved in transcription antitermination. Required for transcription of ribosomal RNA (rRNA) genes. Binds specifically to the boxA antiterminator sequence of the ribosomal RNA (rrn) operons. This is Transcription antitermination protein NusB from Synechococcus elongatus (strain ATCC 33912 / PCC 7942 / FACHB-805) (Anacystis nidulans R2).